We begin with the raw amino-acid sequence, 562 residues long: MDDTEYGRFVDWDKMEGGGQEQSTKVLSCTDFQDLKQMARQGHWAKSHSLRAKVYQKLIKEIPCRTVTPDASVYRDIVGKIVGKRPASSLPLPEFVDDRQIPSYCLNSEGIGAVRKIITCISNQFPDISFCPALPSLVALLLHYSQDEAECFENVSRILACNDPNRRLVDQTFLAFESSCMTFGDLAGKYCQGPHKLMVAVSEDVLEVYSDWQRWIFGELPFAYITRVFDVFLVEGYKVLFRVALALLKFFHKVRGGQPMESNNVKRDIQMFVRDLNQCVAPEKLLEKAFAIRLFSRKEIQLLQMANEKALQQKGITVKQKRQNVHLAVHAENFKSEIVSVKEMRDIWSWIPERFALSQPLLLYTNREHGNSLSRFYLHCEGHEPTLLLIKTTNQEVCGAFLSTDWSERRRSGNKLSFFGTGECFVFRLQPEVERYEWVVIKHPELGKVNASSGDNDANSSQSAKDGIDPSDRLSPFLATRHFNLPSKSASMFMAGSTDCIIIGGGDGQALYFDSDLNYGRTSHCNTFNNQPLCSETFQISIIEVWGFKDNVNNDGAHSALP.

A 1,2-diacyl-sn-glycero-3-phospho-(1D-myo-inositol)-binding positions include Lys-36, Arg-40, Lys-238, Arg-242, and 293 to 297; that span reads RLFSR. A Rab-GAP TBC domain is found at 42-259; that stretch reads GHWAKSHSLR…FFHKVRGGQP (218 aa). Residues 337–549 enclose the TLDc domain; the sequence is EIVSVKEMRD…ISIIEVWGFK (213 aa). The span at 451 to 464 shows a compositional bias: low complexity; it reads ASSGDNDANSSQSA. Positions 451–471 are disordered; sequence ASSGDNDANSSQSAKDGIDPS.

As to quaternary structure, interacts with ARF6.

It localises to the cell membrane. The protein localises to the cytoplasm. The protein resides in the cytoplasmic vesicle membrane. It is found in the presynapse. In terms of biological role, may act as a GTPase-activating protein for Rab family protein(s). Involved in neuronal projections development, probably through a negative modulation of ARF6 function. Involved in the regulation of synaptic vesicle trafficking. This chain is TBC1 domain family member 24 (tbc1d24), found in Xenopus tropicalis (Western clawed frog).